We begin with the raw amino-acid sequence, 438 residues long: uncharacterized protein (438 aa).

A signal peptide spans 1–20; it reads MNTRLALVLCAVGSGVLSFS. Residue cysteine 21 is the site of N-palmitoyl cysteine attachment. A lipid anchor (S-diacylglycerol cysteine) is attached at cysteine 21.

Its subcellular location is the cell membrane. This is an uncharacterized protein from Treponema pallidum (strain Nichols).